Reading from the N-terminus, the 171-residue chain is Protein phosphatase 1 regulatory subunit 1A (171 aa).

Met-1 carries the post-translational modification N-acetylmethionine. Residues 9 to 12 (KIQF) are essential for activity. Residues 17–171 (LEPHLDPEAA…PLDSQGASLV (155 aa)) form a disordered region. Over residues 19 to 29 (PHLDPEAAEQI) the composition is skewed to basic and acidic residues. Position 35 is a phosphothreonine; by PKA (Thr-35). Residues 42 to 54 (TSDQSSPEVDEDR) are essential for activity. Residues Ser-43, Ser-46, Ser-47, and Ser-67 each carry the phosphoserine modification. A compositionally biased stretch (polar residues) spans 122 to 133 (GSASRPDTSGTA). The span at 137 to 148 (AESKPKTQEQRG) shows a compositional bias: basic and acidic residues. The interaction with PPP1R15A stretch occupies residues 143-171 (TQEQRGVEPSTEDLSAHMLPLDSQGASLV).

This sequence belongs to the protein phosphatase inhibitor 1 family. Interacts with PPP1R15A. In terms of processing, phosphorylation of Thr-35 is required for activity.

Inhibitor of protein-phosphatase 1. This protein may be important in hormonal control of glycogen metabolism. Hormones that elevate intracellular cAMP increase I-1 activity in many tissues. I-1 activation may impose cAMP control over proteins that are not directly phosphorylated by PKA. Following a rise in intracellular calcium, I-1 is inactivated by calcineurin (or PP2B). Does not inhibit type-2 phosphatases. The protein is Protein phosphatase 1 regulatory subunit 1A (Ppp1r1a) of Rattus norvegicus (Rat).